The sequence spans 158 residues: 2-C-methyl-D-erythritol 2,4-cyclodiphosphate synthase (158 aa).

Positions 8 and 10 each coordinate a divalent metal cation. Residues 8 to 10 (DVH) and 34 to 35 (HS) each bind 4-CDP-2-C-methyl-D-erythritol 2-phosphate. His-42 lines the a divalent metal cation pocket. 4-CDP-2-C-methyl-D-erythritol 2-phosphate contacts are provided by residues 56-58 (DIG), 61-65 (FPDTD), 100-106 (AQVPKMA), 132-135 (TTTE), Phe-139, and Arg-142.

Belongs to the IspF family. In terms of assembly, homotrimer. It depends on a divalent metal cation as a cofactor.

It carries out the reaction 4-CDP-2-C-methyl-D-erythritol 2-phosphate = 2-C-methyl-D-erythritol 2,4-cyclic diphosphate + CMP. It functions in the pathway isoprenoid biosynthesis; isopentenyl diphosphate biosynthesis via DXP pathway; isopentenyl diphosphate from 1-deoxy-D-xylulose 5-phosphate: step 4/6. Functionally, involved in the biosynthesis of isopentenyl diphosphate (IPP) and dimethylallyl diphosphate (DMAPP), two major building blocks of isoprenoid compounds. Catalyzes the conversion of 4-diphosphocytidyl-2-C-methyl-D-erythritol 2-phosphate (CDP-ME2P) to 2-C-methyl-D-erythritol 2,4-cyclodiphosphate (ME-CPP) with a corresponding release of cytidine 5-monophosphate (CMP). The polypeptide is 2-C-methyl-D-erythritol 2,4-cyclodiphosphate synthase (Sodalis glossinidius (strain morsitans)).